A 162-amino-acid polypeptide reads, in one-letter code: Phosphopantetheine adenylyltransferase (162 aa).

A substrate-binding site is contributed by Thr10. Residues 10-11 (TF) and His18 each bind ATP. Residues Lys42, Leu74, and Arg88 each contribute to the substrate site. ATP-binding positions include 89 to 91 (GLR), Glu99, and 124 to 130 (NSFISST).

This sequence belongs to the bacterial CoaD family. As to quaternary structure, homohexamer. The cofactor is Mg(2+).

It localises to the cytoplasm. The catalysed reaction is (R)-4'-phosphopantetheine + ATP + H(+) = 3'-dephospho-CoA + diphosphate. The protein operates within cofactor biosynthesis; coenzyme A biosynthesis; CoA from (R)-pantothenate: step 4/5. In terms of biological role, reversibly transfers an adenylyl group from ATP to 4'-phosphopantetheine, yielding dephospho-CoA (dPCoA) and pyrophosphate. In Alteromonas mediterranea (strain DSM 17117 / CIP 110805 / LMG 28347 / Deep ecotype), this protein is Phosphopantetheine adenylyltransferase.